Reading from the N-terminus, the 723-residue chain is BBSome complex assembly protein BBS10 (723 aa).

Belongs to the TCP-1 chaperonin family. Component of a complex composed at least of MKKS, BBS10, BBS12, TCP1, CCT2, CCT3, CCT4, CCT5 and CCT8.

It localises to the cell projection. The protein resides in the cilium. Probable molecular chaperone that assists the folding of proteins upon ATP hydrolysis. Plays a role in the assembly of BBSome, a complex involved in ciliogenesis regulating transports vesicles to the cilia. Involved in adipogenic differentiation. In Homo sapiens (Human), this protein is BBSome complex assembly protein BBS10 (BBS10).